The primary structure comprises 185 residues: uncharacterized protein (185 aa).

Residues 17-137 (GKSSIMNALF…QKPIIVVINK (121 aa)) enclose the G domain.

This is an uncharacterized protein from Methanocaldococcus jannaschii (strain ATCC 43067 / DSM 2661 / JAL-1 / JCM 10045 / NBRC 100440) (Methanococcus jannaschii).